Consider the following 175-residue polypeptide: NADH-quinone oxidoreductase subunit I (175 aa).

4Fe-4S ferredoxin-type domains lie at 69–98 and 115–144; these read KRDE…IEAA and KKFE…LDGT. 8 residues coordinate [4Fe-4S] cluster: Cys78, Cys81, Cys84, Cys88, Cys124, Cys127, Cys130, and Cys134.

This sequence belongs to the complex I 23 kDa subunit family. As to quaternary structure, NDH-1 is composed of 14 different subunits. Subunits NuoA, H, J, K, L, M, N constitute the membrane sector of the complex. It depends on [4Fe-4S] cluster as a cofactor.

It localises to the cell inner membrane. The enzyme catalyses a quinone + NADH + 5 H(+)(in) = a quinol + NAD(+) + 4 H(+)(out). NDH-1 shuttles electrons from NADH, via FMN and iron-sulfur (Fe-S) centers, to quinones in the respiratory chain. The immediate electron acceptor for the enzyme in this species is believed to be ubiquinone. Couples the redox reaction to proton translocation (for every two electrons transferred, four hydrogen ions are translocated across the cytoplasmic membrane), and thus conserves the redox energy in a proton gradient. This Leptospira biflexa serovar Patoc (strain Patoc 1 / Ames) protein is NADH-quinone oxidoreductase subunit I.